Here is a 533-residue protein sequence, read N- to C-terminus: Tyrosine protein-kinase src-1 (533 aa).

A lipid anchor (N-myristoyl glycine) is attached at glycine 2. The SH3 domain occupies 71–132; that stretch reads QERETLVALY…PRNFVAKQQT (62 aa). The SH2 domain occupies 138 to 237; sequence WYAGKIPRNR…GLCCQLTFPA (100 aa). Positions 262 to 521 constitute a Protein kinase domain; it reads LHLKRKLGDG…TLYHFFDDYF (260 aa). Residues 268-276 and lysine 290 contribute to the ATP site; that span reads LGDGNFGEV. Aspartate 381 serves as the catalytic Proton acceptor. Tyrosine 416 is modified (phosphotyrosine; by autocatalysis). Tyrosine 528 is subject to Phosphotyrosine.

The protein belongs to the protein kinase superfamily. Tyr protein kinase family. SRC subfamily. Interacts (via SH2 domain and SH3 domain) with unc-5 (via cytoplasmic domain); the interaction requires kinase activity. Interacts (when activated and phosphorylated at 'Tyr-416') with ina-1 (via cytoplasmic domain) and with ced-2 (via SH2 domain). Requires Mg(2+) as cofactor. It depends on Mn(2+) as a cofactor. In terms of processing, may be phosphorylated on Tyr-528 by csk-1. As to expression, expressed in some neurons (ASE, ADF, AVA, AUA, RMDV and BAG) in the head region, anchor cell, vulva, cells around anus, body wall muscle, pharyngeal muscles in procorpus and metacorpus. Expressed in gonadal distal tip cells.

The protein localises to the cell membrane. The protein resides in the cell projection. It is found in the phagocytic cup. It carries out the reaction L-tyrosyl-[protein] + ATP = O-phospho-L-tyrosyl-[protein] + ADP + H(+). With respect to regulation, may be activated by autophosphorylation. May be inhibited by csk-1-mediated phosphorylation. In terms of biological role, non-receptor tyrosine-protein kinase which plays a role in endoderm development by controlling spindle orientation in EMS blastomere, probably downstream of receptor mes-1. Also involved in embryonic body morphogenesis, especially in the formation of the pharynx and the intestine. May be dispensable for pharyngeal muscle organization in the adult. Probably phosphorylates netrin receptor unc-5, to regulate distal tip cell (DTC) migration during gonad development and in axon repulsion. Plays a role in the migration of the QR neuroblast, a precursor of the AVM neuron, and in the migration of the axon cone of AVM, ALM, CAN and PVM neurons. May act downstream of migratory protein mig-13 to control AVM neuron migration. Probably downstream of integrin ina-1/pat-3, plays a role in the clearance of apoptotic cells during mid-embryogenesis. Phosphorylates ced-1 at 'Tyr-1019' which promotes ced-1 proteasomal degradation, maintaining appropriate ced-1 levels for apoptotic cell clearance. The chain is Tyrosine protein-kinase src-1 from Caenorhabditis elegans.